Consider the following 827-residue polypeptide: MDVSLCPTKCTFWRVFLLWSIWGDYLLSVLACPANCLCSKTDINCKKPDDGNLFPLLEGQDSGSSNGNTSINITDISRNITSIHIENWKNLQTLNAVDMELYTGLQRLTIRNSGLRNIQPRAFAKNPHLRYIDLSGNRLTTLSWQLFQTLRLFDLRLERNPFNCSCDIRWIQLWQEKGEANLQSQQLHCMNLDTAVILLRNMNITQCDLPEISVSHVNLTVREGENAVITCNGSGSPLPDVDWTVADLHSINTHQTNLNWTNVHAINLTLVNVTSEDNGFLLTCIAENVVGMSNASVLLTVYYPPRILTLEEPVLHLEHCIAFAVHGNPAPTLHWLHNGQVLRETEIIHMEFYQQGEVSEGCLLFNKPTHYNNGNYTIVATNQLGSANQTIKGHFLEKPFPESTDNFVSIGDYEVSPTPPITVTHKPEEDTFGVSIAVGLAAFACVLLVVLFIMINKYGRRSKFGMKGPVAVISGEEDSASPLHHINHGITTPSSLDAGPDTVVIGMTRIPVIENPQYFRQGHNCHKPDTYVQHIKRRDIVLKRELGEGAFGKVFLAECYNLSPTNDKMLVAVKALKDPTLAARKDFQREAELLTNLQHEHIVKFYGVCGDGDPLIMVFEYMKHGDLNKFLRAHGPDAMILVDGQPRQAKGELGLSQMLHIASQIASGMVYLASQHFVHRDLATRNCLVGANLLVKIGDFGMSRDVYSTDYYRVGGHTMLPIRWMPPESIMYRKFTTESDVWSFGVILWEIFTYGKQPWFQLSNTEVIECITQGRVLERPRVCPKEVYDIMLGCWQREPQQRLNIKEIYKILHALGKATPIYLDILG.

An N-terminal signal peptide occupies residues 1 to 31 (MDVSLCPTKCTFWRVFLLWSIWGDYLLSVLA). 2 disulfide bridges follow: C32–C38 and C36–C45. The Extracellular portion of the chain corresponds to 32 to 430 (CPANCLCSKT…ITVTHKPEED (399 aa)). N-linked (GlcNAc...) asparagine glycans are attached at residues N68, N72, and N79. 2 LRR repeats span residues 104-125 (GLQRLTIRNSGLRNIQPRAFAK) and 128-149 (HLRYIDLSGNRLTTLSWQLFQT). The region spanning 160-209 (NPFNCSCDIRWIQLWQEKGEANLQSQQLHCMNLDTAVILLRNMNITQCDL) is the LRRCT domain. N-linked (GlcNAc...) asparagine glycosylation occurs at N163. 2 disulfide bridges follow: C164–C189 and C166–C207. N-linked (GlcNAc...) asparagine glycosylation is found at N203, N218, N232, N259, N267, N272, and N294. Ig-like C2-type domains follow at residues 210–300 (PEIS…VLLT) and 319–382 (HCIA…VATN). C231 and C284 are disulfide-bonded. C320 and C362 are disulfide-bonded. Residues N375 and N388 are each glycosylated (N-linked (GlcNAc...) asparagine). The chain crosses the membrane as a helical span at residues 431–455 (TFGVSIAVGLAAFACVLLVVLFIMI). The Cytoplasmic portion of the chain corresponds to 456 to 827 (NKYGRRSKFG…ATPIYLDILG (372 aa)). Residue Y518 is modified to Phosphotyrosine; by autocatalysis. The Protein kinase domain occupies 540 to 812 (IVLKRELGEG…LNIKEIYKIL (273 aa)). ATP contacts are provided by residues 546–554 (LGEGAFGKV) and K574. D681 acts as the Proton acceptor in catalysis. Phosphotyrosine; by autocatalysis occurs at positions 707, 711, 712, and 822.

This sequence belongs to the protein kinase superfamily. Tyr protein kinase family. Insulin receptor subfamily. As to quaternary structure, exists in a dynamic equilibrium between monomeric (low affinity) and dimeric (high affinity) structures. Interacts with PTPRS. Post-translationally, ligand-mediated auto-phosphorylation.

The protein localises to the membrane. It carries out the reaction L-tyrosyl-[protein] + ATP = O-phospho-L-tyrosyl-[protein] + ADP + H(+). In terms of biological role, receptor tyrosine kinase involved in nervous system and probably heart development. Upon binding of its ligand NTF3/neurotrophin-3, NTRK3 autophosphorylates and activates different signaling pathways, including the phosphatidylinositol 3-kinase/AKT and the MAPK pathways, that control cell survival and differentiation. The KT and KD isoforms fail to stimulate transformation, process outgrowth or survival. Isoform KI25 exhibits tyrosine phosphorylation in the absence of ligand and is unable to mediate survival of neuronal cells. In Gallus gallus (Chicken), this protein is NT-3 growth factor receptor (NTRK3).